A 424-amino-acid chain; its full sequence is Dihydroorotase (424 aa).

Zn(2+) is bound by residues H61 and H63. Residues 63-65 and N95 each bind substrate; that span reads HLR. Zn(2+) contacts are provided by D153, H180, and H233. Residue N279 coordinates substrate. D306 provides a ligand contact to Zn(2+). D306 is an active-site residue. H310 is a binding site for substrate.

It belongs to the metallo-dependent hydrolases superfamily. DHOase family. Class I DHOase subfamily. Zn(2+) serves as cofactor.

It carries out the reaction (S)-dihydroorotate + H2O = N-carbamoyl-L-aspartate + H(+). It participates in pyrimidine metabolism; UMP biosynthesis via de novo pathway; (S)-dihydroorotate from bicarbonate: step 3/3. Catalyzes the reversible cyclization of carbamoyl aspartate to dihydroorotate. The polypeptide is Dihydroorotase (Citrifermentans bemidjiense (strain ATCC BAA-1014 / DSM 16622 / JCM 12645 / Bem) (Geobacter bemidjiensis)).